Consider the following 308-residue polypeptide: Alpha/beta hydrolase domain-containing protein WAV2 (308 aa).

A helical transmembrane segment spans residues 6–26 (SALFYGFGGIVVAGVALLVAF). Active-site charge relay system residues include Ser159, Asp243, and Arg308.

Belongs to the serine esterase family. In terms of tissue distribution, expressed in roots, rosette leaves, stems and flowers.

It is found in the cell membrane. Functionally, involved in the regulation of root growth. Involved in the suppression of the root bending in response to touch stimuli, gravity and light. Negatively regulates stimulus-induced root bending through inhibition of root tip rotation. In Arabidopsis thaliana (Mouse-ear cress), this protein is Alpha/beta hydrolase domain-containing protein WAV2.